The primary structure comprises 581 residues: Proline--tRNA ligase 1 (581 aa).

Belongs to the class-II aminoacyl-tRNA synthetase family. ProS type 1 subfamily. In terms of assembly, homodimer.

Its subcellular location is the cytoplasm. It catalyses the reaction tRNA(Pro) + L-proline + ATP = L-prolyl-tRNA(Pro) + AMP + diphosphate. Its function is as follows. Catalyzes the attachment of proline to tRNA(Pro) in a two-step reaction: proline is first activated by ATP to form Pro-AMP and then transferred to the acceptor end of tRNA(Pro). As ProRS can inadvertently accommodate and process non-cognate amino acids such as alanine and cysteine, to avoid such errors it has two additional distinct editing activities against alanine. One activity is designated as 'pretransfer' editing and involves the tRNA(Pro)-independent hydrolysis of activated Ala-AMP. The other activity is designated 'posttransfer' editing and involves deacylation of mischarged Ala-tRNA(Pro). The misacylated Cys-tRNA(Pro) is not edited by ProRS. The sequence is that of Proline--tRNA ligase 1 from Rhodococcus jostii (strain RHA1).